Reading from the N-terminus, the 134-residue chain is Cytochrome b (134 aa).

Transmembrane regions (helical) follow at residues 33–53 (FGSLLGVCLATQILTGLFLAM), 77–98 (WILRYLHANGASMFFICLFLHV), and 113–133 (WNIGIILLFAVMATAFMGYVL). Positions 83 and 97 each coordinate heme b.

Belongs to the cytochrome b family. As to quaternary structure, the cytochrome bc1 complex contains 11 subunits: 3 respiratory subunits (MT-CYB, CYC1 and UQCRFS1), 2 core proteins (UQCRC1 and UQCRC2) and 6 low-molecular weight proteins (UQCRH/QCR6, UQCRB/QCR7, UQCRQ/QCR8, UQCR10/QCR9, UQCR11/QCR10 and a cleavage product of UQCRFS1). This cytochrome bc1 complex then forms a dimer. Requires heme b as cofactor.

It localises to the mitochondrion inner membrane. In terms of biological role, component of the ubiquinol-cytochrome c reductase complex (complex III or cytochrome b-c1 complex) that is part of the mitochondrial respiratory chain. The b-c1 complex mediates electron transfer from ubiquinol to cytochrome c. Contributes to the generation of a proton gradient across the mitochondrial membrane that is then used for ATP synthesis. This chain is Cytochrome b (MT-CYB), found in Rhinolophus hipposideros (Lesser horseshoe bat).